An 86-amino-acid polypeptide reads, in one-letter code: Putative membrane protein insertion efficiency factor (86 aa).

Residues 66–86 (AGGHDPVPPVPPQRYPSAQEH) are disordered.

Belongs to the UPF0161 family.

It localises to the cell inner membrane. Functionally, could be involved in insertion of integral membrane proteins into the membrane. This Nitratidesulfovibrio vulgaris (strain ATCC 29579 / DSM 644 / CCUG 34227 / NCIMB 8303 / VKM B-1760 / Hildenborough) (Desulfovibrio vulgaris) protein is Putative membrane protein insertion efficiency factor.